The following is a 341-amino-acid chain: Inactive caspase-12 (341 aa).

Residues 1-92 (MADEKPSNGV…QLSSDISSDG (92 aa)) form the CARD domain. 2 positions are modified to phosphoserine: S85 and S90. Active-site residues include H172 and C220.

It belongs to the peptidase C14A family. As to expression, widely expressed, with highest levels in lung.

In terms of biological role, may function as a negative regulator of inflammatory responses and innate immunity. May reduce cytokine release in response to bacterial lipopolysaccharide during infection. Reduces activation of NF-kappa-B in response to TNF. May lack protease activity. This chain is Inactive caspase-12 (CASP12), found in Homo sapiens (Human).